Reading from the N-terminus, the 464-residue chain is Protein FAM90A3 (464 aa).

3 disordered regions span residues Met1–Leu42, Pro70–Ala389, and Ala411–Pro437. Basic and acidic residues-rich tracts occupy residues Gly74–Val89 and Asn97–Arg114. The span at Leu180–Leu197 shows a compositional bias: low complexity.

It belongs to the FAM90 family.

The protein is Protein FAM90A3 of Homo sapiens (Human).